A 796-amino-acid chain; its full sequence is Conidiophore development regulator abaA (796 aa).

A DNA-binding region (TEA) is located at residues 133–207 (GKDGEPVWSD…QVLDSFLKGD (75 aa)). The tract at residues 215-254 (REQSDRSTAQTQPVGPRWRTSMDHLPSSHYGTHATSSYPE) is disordered. The segment covering 243 to 252 (HYGTHATSSY) has biased composition (polar residues). Residues 341-362 (LSDVNDPLNCEIILLETNLELM) are leucine-zipper-like. A disordered region spans residues 612–643 (EGLSDKTAPTSVLDPFPNLTQQTTSQTAGINV). A compositionally biased stretch (polar residues) spans 629–643 (NLTQQTTSQTAGINV).

This sequence belongs to the TEC1 family.

Its subcellular location is the nucleus. Functionally, brlA, abaA and wetA are pivotal regulators of conidiophore development and conidium maturation. They act individually and together to regulate their own expression and that of numerous other sporulation-specific gene. Controls temporal and spatial specificity in Aspergillus development. Directs the differentiation of phialides and is continuously required for maintenance of their function. Expression of abaA leads to activation of brlA and wetA, cessation of vegetative growth, and accentuated cellular vacuolization. Binds to the sequence 5'-CATTCY-3', where Y is a pyrimidine, making both major- and minor-groove contacts. Multiple abaA binding sites are present in the cis-acting regulatory regions of several developmentally controlled structural genes as well as those of the upstream regulatory gene brlA, the downstream regulatory gene wetA, and abaA itself. This Emericella nidulans (strain FGSC A4 / ATCC 38163 / CBS 112.46 / NRRL 194 / M139) (Aspergillus nidulans) protein is Conidiophore development regulator abaA.